Consider the following 295-residue polypeptide: Acetylglutamate kinase (295 aa).

Substrate is bound by residues 64–65 (GG), Arg86, and Asn179.

The protein belongs to the acetylglutamate kinase family. ArgB subfamily.

Its subcellular location is the cytoplasm. It carries out the reaction N-acetyl-L-glutamate + ATP = N-acetyl-L-glutamyl 5-phosphate + ADP. It functions in the pathway amino-acid biosynthesis; L-arginine biosynthesis; N(2)-acetyl-L-ornithine from L-glutamate: step 2/4. Its function is as follows. Catalyzes the ATP-dependent phosphorylation of N-acetyl-L-glutamate. This is Acetylglutamate kinase from Thermosynechococcus vestitus (strain NIES-2133 / IAM M-273 / BP-1).